The chain runs to 329 residues: uncharacterized protein (329 aa).

In terms of domain architecture, SIS spans 37 to 180 (LAEKILGHSG…AMLLFHSRGV (144 aa)). An ATP-binding site is contributed by 52 to 57 (GVGKSG). CBS domains are found at residues 206 to 265 (MFPK…GGEV) and 274 to 329 (MTAN…AGLL).

This sequence belongs to the SIS family. GutQ/KpsF subfamily.

This is an uncharacterized protein from Chlamydia pneumoniae (Chlamydophila pneumoniae).